The primary structure comprises 104 residues: Salivary protein FS145 (104 aa).

Residues 1–18 (MKLFAVFLLFCLVNQIYC) form the signal peptide. 4 disulfides stabilise this stretch: C32–C80, C62–C89, C72–C100, and C76–C102. A Putative integrin attachment site; atypical (WGD) motif is present at residues 92-94 (WGD).

As to quaternary structure, interacts with host integrin alpha-V/beta-3 (ITGAV:ITGB3).

Its subcellular location is the secreted. In terms of biological role, inhibits proliferation, adhesion and migration of host cells as well as host angiogenesis by blocking host integrin alpha-V/beta-3 (ITGAV:ITGB3). This chain is Salivary protein FS145, found in Xenopsylla cheopis (Oriental rat flea).